A 185-amino-acid chain; its full sequence is Ribosome-recycling factor (185 aa).

Belongs to the RRF family.

Its subcellular location is the cytoplasm. Its function is as follows. Responsible for the release of ribosomes from messenger RNA at the termination of protein biosynthesis. May increase the efficiency of translation by recycling ribosomes from one round of translation to another. The sequence is that of Ribosome-recycling factor from Macrococcus caseolyticus (strain JCSC5402) (Macrococcoides caseolyticum).